We begin with the raw amino-acid sequence, 205 residues long: MCTRKYFLSKKATIVAGVDEVGCGSLVGAVVASAVLMLYPDQEQLFSGLIDSKALSNKKRLRFCNYIQKYSLHWSIGMVNVTEIDQLNIFQARLLSIKRAICNLSMIPDLVLIDGKHAPSLNKNILYQCFVKGDSRIPVISAASIIAKVTRDQAMMMLHTQYPKYGFHRNKGYATVFHLKQLDLYGPTIYHRKTFAPVKYMLSMC.

Residues 13–205 form the RNase H type-2 domain; it reads TIVAGVDEVG…APVKYMLSMC (193 aa). D19, E20, and D114 together coordinate a divalent metal cation.

Belongs to the RNase HII family. Requires Mn(2+) as cofactor. The cofactor is Mg(2+).

It is found in the cytoplasm. It carries out the reaction Endonucleolytic cleavage to 5'-phosphomonoester.. Functionally, endonuclease that specifically degrades the RNA of RNA-DNA hybrids. This is Ribonuclease HII from Blochmanniella floridana.